The following is a 151-amino-acid chain: MKCPFCGYSESKVVDSRSTEDNMAIRRRRECLECSKRYTTYEKVEDIPILVIKKDSSREFFDKSKVINGLIKSCEKRPVSRQQIEDIASDVEKSISNQMVTEVKSDAIGEMVMEKLKEIDEIAYVRFASVYRQFKDINTFMEEILNLVNKK.

The segment at 3–34 (CPFCGYSESKVVDSRSTEDNMAIRRRRECLEC) is a zinc-finger region. The ATP-cone domain occupies 49–139 (ILVIKKDSSR…VYRQFKDINT (91 aa)).

The protein belongs to the NrdR family. The cofactor is Zn(2+).

Negatively regulates transcription of bacterial ribonucleotide reductase nrd genes and operons by binding to NrdR-boxes. The sequence is that of Transcriptional repressor NrdR from Clostridium acetobutylicum (strain ATCC 824 / DSM 792 / JCM 1419 / IAM 19013 / LMG 5710 / NBRC 13948 / NRRL B-527 / VKM B-1787 / 2291 / W).